Reading from the N-terminus, the 274-residue chain is Orotidine 5'-phosphate decarboxylase (274 aa).

Residues D40, 62-64 (KTH), 93-102 (DRKFVDIGNT), Y227, and R245 each bind substrate. K95 acts as the Proton donor in catalysis.

The protein belongs to the OMP decarboxylase family.

It carries out the reaction orotidine 5'-phosphate + H(+) = UMP + CO2. Its pathway is pyrimidine metabolism; UMP biosynthesis via de novo pathway; UMP from orotate: step 2/2. The polypeptide is Orotidine 5'-phosphate decarboxylase (URA3) (Coccidioides immitis (strain RS) (Valley fever fungus)).